The primary structure comprises 2250 residues: RNA1 polyprotein (2250 aa).

The segment covering 346–371 has biased composition (low complexity); it reads SPTVTPSSTPSTSRSSSPEPRVSSPS. Positions 346 to 372 are disordered; sequence SPTVTPSSTPSTSRSSSPEPRVSSPSG. Residues 849–1020 enclose the SF3 helicase domain; it reads LRDAHNALSR…PHFHEFNLLA (172 aa). A helical membrane pass occupies residues 1225–1245; sequence VALCAVLLVGYLIIKFAIFLF. O-(5'-phospho-RNA)-serine is present on S1299. A Peptidase C3 domain is found at 1319–1532; sequence GPEEEPSQSL…YAQIVTLDDF (214 aa). Residues H1362, D1400, and C1495 each act as for picornain 3C-like protease activity in the active site. Residues 1814-1956 form the RdRp catalytic domain; it reads TNWFNGDYSR…SVNDVITEKF (143 aa).

This sequence belongs to the comoviridae genome polyprotein B family. Specific enzymatic cleavages by picornain 3C-like protease in vivo yield mature proteins. Picornain 3C-like protease is autocatalytically processed. In terms of processing, viral genome-linked protein (VPg) is uridylylated by the polymerase and is covalently linked to the 5'-end of genomic RNA. This uridylylated form acts as a nucleotide-peptide primer for the polymerase.

Its subcellular location is the host membrane. The enzyme catalyses RNA(n) + a ribonucleoside 5'-triphosphate = RNA(n+1) + diphosphate. Its function is as follows. Picornain 3C-like protease is a thiol protease that probably cleaves the B and M polyproteins. Viral genome-linked protein (VPg) plays a role in RNA replication. The protein is RNA1 polyprotein of Balsamorhiza sagittata (Apple).